A 121-amino-acid polypeptide reads, in one-letter code: Ribonuclease P protein component (121 aa).

The protein belongs to the RnpA family. Consists of a catalytic RNA component (M1 or rnpB) and a protein subunit.

It carries out the reaction Endonucleolytic cleavage of RNA, removing 5'-extranucleotides from tRNA precursor.. Its function is as follows. RNaseP catalyzes the removal of the 5'-leader sequence from pre-tRNA to produce the mature 5'-terminus. It can also cleave other RNA substrates such as 4.5S RNA. The protein component plays an auxiliary but essential role in vivo by binding to the 5'-leader sequence and broadening the substrate specificity of the ribozyme. In Erythrobacter litoralis (strain HTCC2594), this protein is Ribonuclease P protein component.